Reading from the N-terminus, the 233-residue chain is Phosphoribosylformylglycinamidine synthase subunit PurQ (233 aa).

The Glutamine amidotransferase type-1 domain maps to 3–233; the sequence is SAILVFPGIN…GLVEHLAKAA (231 aa). Catalysis depends on Cys-87, which acts as the Nucleophile. Residues His-204 and Glu-206 contribute to the active site.

As to quaternary structure, part of the FGAM synthase complex composed of 1 PurL, 1 PurQ and 2 PurS subunits.

It is found in the cytoplasm. It carries out the reaction N(2)-formyl-N(1)-(5-phospho-beta-D-ribosyl)glycinamide + L-glutamine + ATP + H2O = 2-formamido-N(1)-(5-O-phospho-beta-D-ribosyl)acetamidine + L-glutamate + ADP + phosphate + H(+). The enzyme catalyses L-glutamine + H2O = L-glutamate + NH4(+). The protein operates within purine metabolism; IMP biosynthesis via de novo pathway; 5-amino-1-(5-phospho-D-ribosyl)imidazole from N(2)-formyl-N(1)-(5-phospho-D-ribosyl)glycinamide: step 1/2. Functionally, part of the phosphoribosylformylglycinamidine synthase complex involved in the purines biosynthetic pathway. Catalyzes the ATP-dependent conversion of formylglycinamide ribonucleotide (FGAR) and glutamine to yield formylglycinamidine ribonucleotide (FGAM) and glutamate. The FGAM synthase complex is composed of three subunits. PurQ produces an ammonia molecule by converting glutamine to glutamate. PurL transfers the ammonia molecule to FGAR to form FGAM in an ATP-dependent manner. PurS interacts with PurQ and PurL and is thought to assist in the transfer of the ammonia molecule from PurQ to PurL. This chain is Phosphoribosylformylglycinamidine synthase subunit PurQ, found in Rhodopseudomonas palustris (strain BisB18).